The chain runs to 299 residues: Transcription elongation factor A protein 2 (299 aa).

Residues 5–82 (EEIARIARRL…KSWKKLLDVS (78 aa)) form the TFIIS N-terminal domain. A Glycyl lysine isopeptide (Lys-Gly) (interchain with G-Cter in ubiquitin) cross-link involves residue Lys57. Ser59 and Ser100 each carry phosphoserine. Residues 83-126 (DGKSRDQGRGTPLPTSSSKDASGTTDLSCKKPDPPRTSSTPRIT) form a disordered region. Polar residues predominate over residues 95 to 109 (LPTSSSKDASGTTDL). The 117-residue stretch at 138–254 (VRNKCREMLT…EHQMARTGGT (117 aa)) folds into the TFIIS central domain. The segment at 257-297 (DLFTCNKCRKKNCTYTQVQTRSSDEPMTTYVVCNECGNRWK) adopts a TFIIS-type zinc-finger fold. Residues Cys261, Cys264, Cys289, and Cys292 each coordinate Zn(2+).

This sequence belongs to the TFS-II family. In terms of assembly, interacts with the basal transcription factor GTF2B. Interacts with REXO1. Testis specific.

Its subcellular location is the nucleus. In terms of biological role, necessary for efficient RNA polymerase II transcription elongation past template-encoded arresting sites. The arresting sites in DNA have the property of trapping a certain fraction of elongating RNA polymerases that pass through, resulting in locked ternary complexes. Cleavage of the nascent transcript by S-II allows the resumption of elongation from the new 3'-terminus. This Rattus norvegicus (Rat) protein is Transcription elongation factor A protein 2 (Tcea2).